The following is a 566-amino-acid chain: 4-hydroxy-7-methoxy-3-oxo-3,4-dihydro-2H-1,4-benzoxazin-2-yl glucoside beta-D-glucosidase 1, chloroplastic (566 aa).

A chloroplast-targeting transit peptide spans 1–54; that stretch reads MAPLLAAAMNHAAAHPGLRSHLVGPNNESFSRHHLPSSSPQSSKRRCNLSFTTR. The tract at residues 17-47 is disordered; the sequence is GLRSHLVGPNNESFSRHHLPSSSPQSSKRRC. A beta-D-glucoside is bound by residues Gln-92, His-196, and 244–245; that span reads NE. Glu-245 functions as the Proton donor in the catalytic mechanism. Cys-264 and Cys-270 form a disulfide bridge. A dimerization region spans residues 325 to 361; it reads SFLDKQAEERSWDINLGWFLEPVVRGDYPFSMRSLAR. An a beta-D-glucoside-binding site is contributed by Tyr-387. 2 dimerization regions span residues 394 to 405 and 450 to 453; these read NIDISPNYSPVL and KYGN. Residues Glu-460, Trp-511, 518–519, and Tyr-527 contribute to the a beta-D-glucoside site; that span reads EW. Glu-460 serves as the catalytic Nucleophile.

The protein belongs to the glycosyl hydrolase 1 family. In terms of assembly, homo- and heterodimer. Expressed in all seedling parts. Most abundant in the coleoptile.

The protein resides in the plastid. It localises to the chloroplast. It carries out the reaction Hydrolysis of terminal, non-reducing beta-D-glucosyl residues with release of beta-D-glucose.. It catalyses the reaction DIMBOA beta-D-glucoside + H2O = DIMBOA + D-glucose. The catalysed reaction is DIBOA beta-D-glucoside + H2O = DIBOA + D-glucose. Its activity is regulated as follows. Reversibly inhibited by micromolar concentrations of Hg(2+) or Ag(+), but irreversibly inhibited by alkylation in presence of urea. Competitive inhibition by p-nitrophenyl beta-D-thioglucoside (pNPTGlc), glucotetrazole, and para-hydroxy-S-mandelonitrile beta-glucoside (dhurrin). Its function is as follows. Is implicated in many functions such as ABA metabolism, hydrolysis of conjugated gibberellins, conversion of storage forms of cytokinins to active forms. Also acts in defense of young plant parts against pests via the production of hydroxamic acids from hydroxamic acid glucosides. Enzymatic activity is highly correlated with plant growth. The preferred substrate is DIMBOA-beta-D-glucoside. Hydrolyzes the chromogenic substrate 6-bromo-2-naphthyl-beta-D-glucoside (6BNGlc) and various artificial aryl beta-glucosides. No activity with cellobiose, arbutin, gentiobiose, linamarin or dhurrin as substrates. The polypeptide is 4-hydroxy-7-methoxy-3-oxo-3,4-dihydro-2H-1,4-benzoxazin-2-yl glucoside beta-D-glucosidase 1, chloroplastic (GLU1) (Zea mays (Maize)).